The chain runs to 623 residues: UvrABC system protein C (623 aa).

In terms of domain architecture, GIY-YIG spans 12–91 (PSPGVYLMKS…IKQHRPKYNI (80 aa)). Residues 201–236 (TEVARLYRSKMNLAAEQMRYEDAARYRDLLRAIEVT) enclose the UVR domain. The disordered stretch occupies residues 603 to 623 (RLHGSPLPNPPPPGEGAMDRK).

This sequence belongs to the UvrC family. In terms of assembly, interacts with UvrB in an incision complex.

The protein localises to the cytoplasm. In terms of biological role, the UvrABC repair system catalyzes the recognition and processing of DNA lesions. UvrC both incises the 5' and 3' sides of the lesion. The N-terminal half is responsible for the 3' incision and the C-terminal half is responsible for the 5' incision. The chain is UvrABC system protein C from Citrifermentans bemidjiense (strain ATCC BAA-1014 / DSM 16622 / JCM 12645 / Bem) (Geobacter bemidjiensis).